A 437-amino-acid chain; its full sequence is Transcription factor TGAL5 (437 aa).

A disordered region spans residues 33-75 (QEPYSNSQSVGSTTDSSSAQNTMSQAELVSPASMRSDSGQEQQ). The segment covering 37–50 (SNSQSVGSTTDSSS) has biased composition (low complexity). Residues 51–75 (AQNTMSQAELVSPASMRSDSGQEQQ) are compositionally biased toward polar residues. The bZIP domain maps to 126–170 (DAKTERRLAQNREAARKSRLRKKAYVQQLETSRIRLQQIEQELQR). The interval 128 to 148 (KTERRLAQNREAARKSRLRKK) is basic motif. A leucine-zipper region spans residues 154–168 (LETSRIRLQQIEQEL). The DOG1 domain maps to 191–405 (AVMFDMDYTR…RALSSLWASR (215 aa)).

Belongs to the bZIP family. As to quaternary structure, interacts with NPR5/NH4, NH5.1 and NH5.2.

Its subcellular location is the nucleus. In terms of biological role, transcriptional regulator involved in defense response. The chain is Transcription factor TGAL5 from Oryza sativa subsp. japonica (Rice).